Here is a 302-residue protein sequence, read N- to C-terminus: Aspartate carbamoyltransferase catalytic subunit (302 aa).

The carbamoyl phosphate site is built by Arg53 and Thr54. Lys82 contributes to the L-aspartate binding site. Carbamoyl phosphate is bound by residues Arg103, His131, and Gln134. Residues Arg164 and Arg223 each contribute to the L-aspartate site. Positions 260 and 261 each coordinate carbamoyl phosphate.

It belongs to the aspartate/ornithine carbamoyltransferase superfamily. ATCase family. In terms of assembly, heterooligomer of catalytic and regulatory chains.

The enzyme catalyses carbamoyl phosphate + L-aspartate = N-carbamoyl-L-aspartate + phosphate + H(+). It participates in pyrimidine metabolism; UMP biosynthesis via de novo pathway; (S)-dihydroorotate from bicarbonate: step 2/3. Catalyzes the condensation of carbamoyl phosphate and aspartate to form carbamoyl aspartate and inorganic phosphate, the committed step in the de novo pyrimidine nucleotide biosynthesis pathway. The protein is Aspartate carbamoyltransferase catalytic subunit of Methanococcus maripaludis (strain C6 / ATCC BAA-1332).